Consider the following 642-residue polypeptide: MPVITLPDGSKREFAHPVSTLDVAADIGPGLAKACIAGRVNGELKDACDLIETDAELSIITAKDEEGIEILRHSCAHLLGHAIKQLWPQTKMAIGPVIDNGFYYDIDLEHKLTQEDIEALEKRMLELAKTNYDVVKRVVSWQEARDTFAARGEEYKIAILDENISKDATPALYHHEEYTDMCRGPHVPNMRFCHHFKLMSIAGAYWRGNSENKMLQRIYGTAWADKKALSTHLARLEEAAKRDHRKIGKQLDLYHMQEEAPGMVFWHNDGWSIFLELERFIRRKLNQYTYQEVKGPLMMDRVLWERSGHWDKYSEAMFTTSSENREYAVKPMNCPGHVQIFNQGLKSYRDLPLRMAEFGCCHRNEPSGSLHGLMRVRGFTQDDAHIFCTEDQVQAEVSSCIQMVYDTYSTFGFENIVVKLSTRPEKRIGDDAMWDRAEEALKQALRAKNIEFTILPGEGAFYGPKIEFTLHDCLDRAWQCGTVQLDYALPSRLGATYVAEDNSRQTPVMIHRAILGSLERFLGILIEEYAGRFPTWLAPMQVVVMNITDKQADYVEEVVKFFKEQGIRASFDLRNEKIGFKIREHTLRRVPYLLVVGDQEMENKEVAVRTRDGVDLGKMRIEDFAAKIHQQISLRSLKLLEE.

The 61-residue stretch at 1–61 (MPVITLPDGS…ETDAELSIIT (61 aa)) folds into the TGS domain. The catalytic stretch occupies residues 243 to 534 (DHRKIGKQLD…LIEEYAGRFP (292 aa)). Residues Cys-334, His-385, and His-511 each contribute to the Zn(2+) site.

It belongs to the class-II aminoacyl-tRNA synthetase family. In terms of assembly, homodimer. Zn(2+) is required as a cofactor.

It is found in the cytoplasm. The enzyme catalyses tRNA(Thr) + L-threonine + ATP = L-threonyl-tRNA(Thr) + AMP + diphosphate + H(+). In terms of biological role, catalyzes the attachment of threonine to tRNA(Thr) in a two-step reaction: L-threonine is first activated by ATP to form Thr-AMP and then transferred to the acceptor end of tRNA(Thr). Also edits incorrectly charged L-seryl-tRNA(Thr). The polypeptide is Threonine--tRNA ligase (Shewanella sp. (strain MR-7)).